The following is a 247-amino-acid chain: E3 SUMO-protein ligase NSE2 (247 aa).

At Met-1 the chain carries N-acetylmethionine. Glycyl lysine isopeptide (Lys-Gly) (interchain with G-Cter in SUMO2) cross-links involve residues Lys-90 and Lys-107. Residue Ser-116 is modified to Phosphoserine. Glycyl lysine isopeptide (Lys-Gly) (interchain with G-Cter in SUMO2) cross-links involve residues Lys-125 and Lys-130. Residues 154–240 (MDEDMIVTQS…LRRAIESHNK (87 aa)) form an SP-RING-type zinc finger. Positions 185, 187, 210, and 215 each coordinate Zn(2+).

It belongs to the NSE2 family. As to quaternary structure, component of the SMC5-SMC6 complex which consists at least of SMC5, SMC6, NSMCE2, NSMCE1, NSMCE4A or EID3 and NSMCE3. In terms of processing, sumoylated, possibly via autosumoylation.

It is found in the nucleus. The protein localises to the chromosome. The protein resides in the telomere. Its subcellular location is the PML body. The protein operates within protein modification; protein sumoylation. In terms of biological role, E3 SUMO-protein ligase component of the SMC5-SMC6 complex, a complex involved in DNA double-strand break repair by homologous recombination. Is not be required for the stability of the complex. The complex may promote sister chromatid homologous recombination by recruiting the SMC1-SMC3 cohesin complex to double-strand breaks. Acts as an E3 ligase mediating SUMO attachment to various proteins such as SMC6L1 and TSNAX, the shelterin complex subunits TERF1, TERF2, TINF2 and TERF2IP, RAD51AP1, and maybe the cohesin components RAD21 and STAG2. Required for recruitment of telomeres to PML nuclear bodies. Required for sister chromatid cohesion during prometaphase and mitotic progression. The sequence is that of E3 SUMO-protein ligase NSE2 (Nsmce2) from Rattus norvegicus (Rat).